The chain runs to 582 residues: MHPRYSPAPPPQQQQQMGGPPHQQQGGGGGGGGSMRGPSNAQQLPPQIPRSQNYSNGSSSSAAAAPPTSRSAFPGAPLTASAVALKGALPQRPPAMTSPAAAAAGAALAAGAPYRGAASWTPQGYAPAAAAAAAAVAQQAAYRYTAPLPQPAYAAYTPHTATTPATTTYGQRVPTAASPSNTNSSSSSNTGSQSGTLSTSLSNTTNTNTNMGPNGTVQNQNQQGGEQLSKTNLYIRGLQQGTTDKDLVNMCAQYGTIISTKAILDKTTNKCKGYGFVDFEQPAFAECAVKGLQGKGVQAQMAKQQEQDPTNLYIANLPPHFKETDLEAMLSKYGQVVSTRILRDQQMNSKGVGFARMESREKCEQIIQMFNGNTIPGAKDPLLVKFADGGPKKKNLFKTPDPNARAWRDVSAEGIPVAYDPTMQQNGVSVNVGTPIGVPYSRFSAPQVGGYPVAGSQWIPGYMMTQPITQVDDQTSYSPQYMQMAAAPQLGVTSYKPEAVNQVQPRGISMMVSGDTGVPYGTMMPQLATLQIGNSYISPTYPYYAPPPTIIPTMPMTDSEQASTAASPDEAYTQYPHQAAPK.

Residues 1 to 12 (MHPRYSPAPPPQ) show a composition bias toward pro residues. A disordered region spans residues 1-73 (MHPRYSPAPP…AAPPTSRSAF (73 aa)). Tyrosine 5 is subject to Phosphotyrosine. Residues 13–24 (QQQQMGGPPHQQ) are compositionally biased toward low complexity. Gly residues predominate over residues 25–35 (QGGGGGGGGSM). Polar residues predominate over residues 37-57 (GPSNAQQLPPQIPRSQNYSNG). The segment covering 58–72 (SSSSAAAAPPTSRSA) has biased composition (low complexity). Phosphotyrosine occurs at positions 125 and 142. Positions 164-225 (PATTTYGQRV…TVQNQNQQGG (62 aa)) are disordered. The span at 178 to 225 (SPSNTNSSSSSNTGSQSGTLSTSLSNTTNTNTNMGPNGTVQNQNQQGG) shows a compositional bias: low complexity. 2 RRM domains span residues 231-304 (TNLY…MAKQ) and 310-389 (TNLY…FADG). Residues 555 to 582 (PMTDSEQASTAASPDEAYTQYPHQAAPK) form a disordered region.

Functionally, has a role in the perception of gravity. This is Protein alan shepard from Drosophila erecta (Fruit fly).